We begin with the raw amino-acid sequence, 244 residues long: Carbonic anhydrase (244 aa).

An N-terminal signal peptide occupies residues 1-19 (MKGKLSIALMLSVCFSASA). An Alpha-carbonic anhydrase domain is found at 23–244 (VHWGYEGNGD…QPLNGRIIIH (222 aa)). C46 and C199 are joined by a disulfide. Residue H84 is the Proton acceptor of the active site. H109, H111, and H128 together coordinate Zn(2+). Position 195-196 (195-196 (TT)) interacts with substrate.

This sequence belongs to the alpha-carbonic anhydrase family. The cofactor is Zn(2+).

Its subcellular location is the periplasm. The catalysed reaction is hydrogencarbonate + H(+) = CO2 + H2O. Reversible hydration of carbon dioxide. The protein is Carbonic anhydrase (cah) of Pectobacterium carotovorum (Erwinia carotovora).